The following is a 92-amino-acid chain: Small ribosomal subunit protein uS19 (92 aa).

The protein belongs to the universal ribosomal protein uS19 family.

Protein S19 forms a complex with S13 that binds strongly to the 16S ribosomal RNA. The chain is Small ribosomal subunit protein uS19 from Thermobifida fusca (strain YX).